The chain runs to 400 residues: Enoyl-[acyl-carrier-protein] reductase [NADH] (400 aa).

NAD(+) is bound by residues 48–53, 74–75, 111–112, and 139–140; these read GASSGY, FE, DA, and LA. Tyr225 is a binding site for substrate. Tyr235 serves as the catalytic Proton donor. Residues Lys244 and 273–275 each bind NAD(+); that span reads VVT.

Belongs to the TER reductase family. As to quaternary structure, monomer.

The enzyme catalyses a 2,3-saturated acyl-[ACP] + NAD(+) = a (2E)-enoyl-[ACP] + NADH + H(+). It participates in lipid metabolism; fatty acid biosynthesis. In terms of biological role, involved in the final reduction of the elongation cycle of fatty acid synthesis (FAS II). Catalyzes the reduction of a carbon-carbon double bond in an enoyl moiety that is covalently linked to an acyl carrier protein (ACP). The polypeptide is Enoyl-[acyl-carrier-protein] reductase [NADH] (Marinomonas sp. (strain MWYL1)).